A 419-amino-acid chain; its full sequence is Tyrosine--tRNA ligase (419 aa).

Tyr-34 is a binding site for L-tyrosine. The short motif at 39–48 is the 'HIGH' region element; that stretch reads PSGDSMHIGH. Residues Tyr-168 and Gln-172 each coordinate L-tyrosine. The 'KMSKS' region motif lies at 230–234; the sequence is KFGKS. Lys-233 serves as a coordination point for ATP. An S4 RNA-binding domain is found at 352–418; sequence ANLVDWLVTL…GKKKYFLVSY (67 aa).

It belongs to the class-I aminoacyl-tRNA synthetase family. TyrS type 1 subfamily. As to quaternary structure, homodimer.

The protein resides in the cytoplasm. The enzyme catalyses tRNA(Tyr) + L-tyrosine + ATP = L-tyrosyl-tRNA(Tyr) + AMP + diphosphate + H(+). Catalyzes the attachment of tyrosine to tRNA(Tyr) in a two-step reaction: tyrosine is first activated by ATP to form Tyr-AMP and then transferred to the acceptor end of tRNA(Tyr). This chain is Tyrosine--tRNA ligase, found in Listeria monocytogenes serovar 1/2a (strain ATCC BAA-679 / EGD-e).